A 72-amino-acid chain; its full sequence is SRY-related protein MG43 (72 aa).

A DNA-binding region (HMG box) is located at residues 1-69; that stretch reads VKRPMNAFMV…KHMADYPDYK (69 aa).

It localises to the nucleus. This chain is SRY-related protein MG43, found in Tarentola mauritanica (Common wall gecko).